Here is a 33-residue protein sequence, read N- to C-terminus: Photosystem II reaction center protein Psb30 (33 aa).

Residues 5-25 (VVVQLGSLSLIVLAGPIIVLL) form a helical membrane-spanning segment.

This sequence belongs to the Psb30/Ycf12 family. PSII is composed of 1 copy each of membrane proteins PsbA, PsbB, PsbC, PsbD, PsbE, PsbF, PsbH, PsbI, PsbJ, PsbK, PsbL, PsbM, PsbT, PsbX, PsbY, PsbZ, Psb30/Ycf12, peripheral proteins of the oxygen-evolving complex and a large number of cofactors. It forms dimeric complexes.

Its subcellular location is the plastid. It is found in the chloroplast thylakoid membrane. Its function is as follows. A core subunit of photosystem II (PSII), probably helps stabilize the reaction center. The chain is Photosystem II reaction center protein Psb30 from Mesostigma viride (Green alga).